The sequence spans 630 residues: MRISFAIASTAKRFVHRSLVVRGNAATVSPSFSFFWRRAFSGKTSYDYREKLSRNGLSELKLDDAVALFGEMVKSRPFPSIIEFSKLLSAIAKMNKFDVVISLGEQMQNLGIPHNHYTYSILINCFCRRSQLPLALAVLGKMMKLGYEPNIVTLSSLLNGYCHSKRISEAVALVDQMFVTGYQPNTVTFNTLIHGLFLHNKASEAMALIDRMVAKGCQPDLVTYGVVVNGLCKRGDTDLAFNLLNKMEQGKLEPGVLIYNTIIDGLCKYKHMDDALNLFKEMETKGIRPNVVTYSSLISCLCNYGRWSDASRLLSDMIERKINPDVFTFSALIDAFVKEGKLVEAEKLYDEMVKRSIDPSIVTYSSLINGFCMHDRLDEAKQMFEFMVSKHCFPDVVTYNTLIKGFCKYKRVEEGMEVFREMSQRGLVGNTVTYNILIQGLFQAGDCDMAQEIFKEMVSDGVPPNIMTYNTLLDGLCKNGKLEKAMVVFEYLQRSKMEPTIYTYNIMIEGMCKAGKVEDGWDLFCNLSLKGVKPDVVAYNTMISGFCRKGSKEEADALFKEMKEDGTLPNSGCYNTLIRARLRDGDREASAELIKEMRSCGFAGDASTIGLVTNMLHDGRLDKSFLDMLS.

Residues 1–22 (MRISFAIASTAKRFVHRSLVVR) constitute a mitochondrion transit peptide. 16 PPR repeats span residues 44–79 (TSYD…RPFP), 80–114 (SIIE…GIPH), 115–149 (NHYT…GYEP), 150–184 (NIVT…GYQP), 185–219 (NTVT…GCQP), 220–254 (DLVT…KLEP), 255–289 (GVLI…GIRP), 290–324 (NVVT…KINP), 325–359 (DVFT…SIDP), 360–394 (SIVT…HCFP), 395–429 (DVVT…GLVG), 430–464 (NTVT…GVPP), 465–499 (NIMT…KMEP), 500–534 (TIYT…GVKP), 535–569 (DVVA…GTLP), and 570–604 (NSGC…GFAG).

This sequence belongs to the PPR family. P subfamily.

It is found in the mitochondrion. In Arabidopsis thaliana (Mouse-ear cress), this protein is Pentatricopeptide repeat-containing protein At1g62670, mitochondrial.